The chain runs to 202 residues: Prostamide/prostaglandin F synthase (202 aa).

Phosphotyrosine is present on Y108.

The protein belongs to the peroxiredoxin-like PRXL2 family. Prostamide/prostaglandin F synthase subfamily.

It is found in the cytoplasm. The protein resides in the cytosol. It carries out the reaction prostaglandin H2 + [thioredoxin]-dithiol = prostaglandin F2alpha + [thioredoxin]-disulfide. It catalyses the reaction prostamide F2alpha + [thioredoxin]-disulfide = prostamide H2 + [thioredoxin]-dithiol. Functionally, catalyzes the reduction of prostaglandin-ethanolamide H(2) (prostamide H(2)) to prostamide F(2alpha) with NADPH as proton donor. Also able to reduce prostaglandin H(2) to prostaglandin F(2alpha). The polypeptide is Prostamide/prostaglandin F synthase (PRXL2B) (Sus scrofa (Pig)).